Here is a 428-residue protein sequence, read N- to C-terminus: Citrate synthase (428 aa).

Catalysis depends on residues H265, H306, and D363.

It belongs to the citrate synthase family. As to quaternary structure, homohexamer.

The catalysed reaction is oxaloacetate + acetyl-CoA + H2O = citrate + CoA + H(+). It functions in the pathway carbohydrate metabolism; tricarboxylic acid cycle; isocitrate from oxaloacetate: step 1/2. With respect to regulation, allosterically inhibited by NADH. The protein is Citrate synthase (gltA) of Pseudomonas aeruginosa (strain ATCC 15692 / DSM 22644 / CIP 104116 / JCM 14847 / LMG 12228 / 1C / PRS 101 / PAO1).